A 783-amino-acid chain; its full sequence is Cyclin-dependent kinase 11A (783 aa).

Basic and acidic residues predominate over residues 18 to 58 (QEKKRRKEQEEKAEIKRLKNSDDRDSKRDSLEEGELRDHCM). The interval 18–396 (QEKKRRKEQE…SALTEGDYVP (379 aa)) is disordered. Phosphoserine is present on residues serine 47 and serine 72. The segment covering 95–125 (EKVHHRKDEKRKEKWKHARVKEREHERRKRH) has biased composition (basic residues). Basic and acidic residues-rich tracts occupy residues 126 to 215 (REEQ…DKVK), 226 to 241 (PPRE…KPGE), and 252 to 264 (QLKE…RDLL). At serine 271 the chain carries Phosphoserine. Residues 279–290 (SAESSSAESGSG) are compositionally biased toward low complexity. 2 stretches are compositionally biased toward acidic residues: residues 291–352 (SEEE…EERE) and 371–380 (ESEEAEEEVG). The Protein kinase domain maps to 427-647 (QCLNRIEEGT…VFKELGTPSE (221 aa)). Residues 432–440 (IEEGTYGVV) and lysine 455 contribute to the ATP site. A Phosphoserine; by CDK7 modification is found at serine 470. Threonine 476 is subject to Phosphothreonine; by CDK7. Aspartate 550 serves as the catalytic Proton acceptor. At serine 577 the chain carries Phosphoserine. The residue at position 582 (tyrosine 582) is a Phosphotyrosine. A phosphothreonine mark is found at threonine 583 and threonine 739. Residues 721-783 (SMFPTWPAKS…AAGPGFSLKF (63 aa)) form a disordered region. Phosphoserine is present on serine 740.

Belongs to the protein kinase superfamily. CMGC Ser/Thr protein kinase family. CDC2/CDKX subfamily. The cleaved p110 isoform, p110C, binds to the serine/threonine kinase PAK1. The p58 isoform but not the p110 isoform or p110C interacts with CCND3. The p110 isoforms are found in large molecular weight complexes containing CCNL1 and SFRS7. Requires Mg(2+) as cofactor. In terms of processing, during apoptosis, induced by Fas or tumor necrosis factor, specific CKD11 p110 isoforms are cleaved by caspases to produce a protein (p110C) that contains the C-terminal kinase domain of the CDK11 proteins. In terms of tissue distribution, expressed ubiquitously. Some evidence of isoform-specific tissue distribution.

The protein resides in the cytoplasm. Its subcellular location is the nucleus. The enzyme catalyses L-seryl-[protein] + ATP = O-phospho-L-seryl-[protein] + ADP + H(+). The catalysed reaction is L-threonyl-[protein] + ATP = O-phospho-L-threonyl-[protein] + ADP + H(+). Its activity is regulated as follows. Phosphorylation at Thr-436 or Tyr-437 inactivates the enzyme, while phosphorylation at Thr-583 activates it. Its function is as follows. Appears to play multiple roles in cell cycle progression, cytokinesis and apoptosis. The p110 isoforms have been suggested to be involved in pre-mRNA splicing, potentially by phosphorylating the splicing protein SFRS7. The p58 isoform may act as a negative regulator of normal cell cycle progression. This is Cyclin-dependent kinase 11A (CDK11A) from Homo sapiens (Human).